A 105-amino-acid chain; its full sequence is Large ribosomal subunit protein eL36 (105 aa).

The residue at position 62 (K62) is an N6-acetyllysine.

It belongs to the eukaryotic ribosomal protein eL36 family. In terms of assembly, component of the large ribosomal subunit.

Its subcellular location is the cytoplasm. It is found in the cytosol. Component of the large ribosomal subunit. The ribosome is a large ribonucleoprotein complex responsible for the synthesis of proteins in the cell. This is Large ribosomal subunit protein eL36 (RPL36) from Bos taurus (Bovine).